Consider the following 53-residue polypeptide: ATP synthase protein 8 (53 aa).

The chain crosses the membrane as a helical span at residues 9–29; sequence WITSMLMFWISVSILFSTLWW.

It belongs to the ATPase protein 8 family. In terms of assembly, F-type ATPases have 2 components, CF(1) - the catalytic core - and CF(0) - the membrane proton channel.

Its subcellular location is the mitochondrion membrane. Mitochondrial membrane ATP synthase (F(1)F(0) ATP synthase or Complex V) produces ATP from ADP in the presence of a proton gradient across the membrane which is generated by electron transport complexes of the respiratory chain. F-type ATPases consist of two structural domains, F(1) - containing the extramembraneous catalytic core and F(0) - containing the membrane proton channel, linked together by a central stalk and a peripheral stalk. During catalysis, ATP synthesis in the catalytic domain of F(1) is coupled via a rotary mechanism of the central stalk subunits to proton translocation. Part of the complex F(0) domain. Minor subunit located with subunit a in the membrane. This chain is ATP synthase protein 8 (MT-ATP8), found in Lumbricus terrestris (Common earthworm).